The following is a 448-amino-acid chain: Vicilin Cor a 11.0101 (448 aa).

Residues 1-44 (MLPKEDPELKKCKHKCRDERQFDEQQRRDGKQICEEKARERQQE) show a composition bias toward basic and acidic residues. Residues 1-66 (MLPKEDPELK…QEENPYVFQD (66 aa)) form a disordered region. A glycan (N-linked (GlcNAc...) asparagine) is linked at Asn47. Cupin type-1 domains follow at residues 84-220 (ENFT…EQLE) and 263-418 (INLL…REVE). The N-linked (GlcNAc...) asparagine glycan is linked to Asn301. 3 residues coordinate Cu cation: Cys333, His335, and His362.

It belongs to the 7S seed storage protein family. In terms of assembly, homotrimer. Homohexamer. In terms of processing, N-glycosylated at Asn-301 mostly with xylosylated paucimannosidic-type N-glycan MMX (an N-linked glycan with beta-1,2-xylose residue in the structure) and also with MMXF (a complex N-linked glycan with alpha-1,3-fucose and beta-1,2-xylose residues in the structure). Post-translationally, a mixture of proteolytically processed and unprocessed subunits exist. Expressed in seed (at protein level). Expressed in seed.

Seed storage protein. Does not have superoxide dismutase (SOD) activity. The polypeptide is Vicilin Cor a 11.0101 (Corylus avellana (European hazel)).